The following is a 354-amino-acid chain: NADH-quinone oxidoreductase subunit H (354 aa).

Transmembrane regions (helical) follow at residues 25 to 45 (LVRI…LILW), 91 to 111 (WIYM…WAVI), 126 to 146 (LLYA…AGWA), 170 to 190 (MGFA…SGIV), 205 to 225 (FLSW…ISGI), 267 to 287 (IVIS…PFGF), 290 to 310 (FIPG…VFIW), and 330 to 350 (IFIP…MSPL).

It belongs to the complex I subunit 1 family. As to quaternary structure, NDH-1 is composed of 14 different subunits. Subunits NuoA, H, J, K, L, M, N constitute the membrane sector of the complex.

Its subcellular location is the cell inner membrane. It carries out the reaction a quinone + NADH + 5 H(+)(in) = a quinol + NAD(+) + 4 H(+)(out). Functionally, NDH-1 shuttles electrons from NADH, via FMN and iron-sulfur (Fe-S) centers, to quinones in the respiratory chain. The immediate electron acceptor for the enzyme in this species is believed to be ubiquinone. Couples the redox reaction to proton translocation (for every two electrons transferred, four hydrogen ions are translocated across the cytoplasmic membrane), and thus conserves the redox energy in a proton gradient. This subunit may bind ubiquinone. The sequence is that of NADH-quinone oxidoreductase subunit H from Paraburkholderia xenovorans (strain LB400).